Here is a 238-residue protein sequence, read N- to C-terminus: Survival of motor neuron-related-splicing factor 30 (238 aa).

The Tudor domain occupies 72 to 132; sequence SWKVGDKCMA…KPVEEGRKAK (61 aa). The Nuclear localization signal motif lies at 142 to 160; the sequence is KKEMIAQQREYKKKKALKK. Ser201 carries the post-translational modification Phosphoserine. Lys219 is subject to N6-acetyllysine.

The protein belongs to the SMN family. Associates with spliceosomes. Associates with U4/U5/U6 tri-snRNP and with U2 snRNP.

It is found in the nucleus speckle. The protein localises to the nucleus. The protein resides in the cajal body. Functionally, involved in spliceosome assembly. The chain is Survival of motor neuron-related-splicing factor 30 (Smndc1) from Rattus norvegicus (Rat).